Consider the following 297-residue polypeptide: tRNA dimethylallyltransferase (297 aa).

15–22 (GPTASGKS) provides a ligand contact to ATP. Position 17-22 (17-22 (TASGKS)) interacts with substrate. Interaction with substrate tRNA regions lie at residues 40-43 (DSMQ) and 164-168 (QRIVR).

The protein belongs to the IPP transferase family. In terms of assembly, monomer. Requires Mg(2+) as cofactor.

The enzyme catalyses adenosine(37) in tRNA + dimethylallyl diphosphate = N(6)-dimethylallyladenosine(37) in tRNA + diphosphate. Functionally, catalyzes the transfer of a dimethylallyl group onto the adenine at position 37 in tRNAs that read codons beginning with uridine, leading to the formation of N6-(dimethylallyl)adenosine (i(6)A). The sequence is that of tRNA dimethylallyltransferase from Rhizobium leguminosarum bv. trifolii (strain WSM2304).